Here is a 244-residue protein sequence, read N- to C-terminus: tRNA (guanine-N(7)-)-methyltransferase (244 aa).

S-adenosyl-L-methionine-binding residues include E75, E100, D127, and D150. Residue D150 is part of the active site. Substrate is bound by residues K154, D186, and 223-226 (TRFE).

Belongs to the class I-like SAM-binding methyltransferase superfamily. TrmB family.

The enzyme catalyses guanosine(46) in tRNA + S-adenosyl-L-methionine = N(7)-methylguanosine(46) in tRNA + S-adenosyl-L-homocysteine. The protein operates within tRNA modification; N(7)-methylguanine-tRNA biosynthesis. Functionally, catalyzes the formation of N(7)-methylguanine at position 46 (m7G46) in tRNA. This is tRNA (guanine-N(7)-)-methyltransferase from Xylella fastidiosa (strain 9a5c).